Here is a 279-residue protein sequence, read N- to C-terminus: Putative pyruvate, phosphate dikinase regulatory protein (279 aa).

154-161 is an ADP binding site; sequence GVSRTSKT.

Belongs to the pyruvate, phosphate/water dikinase regulatory protein family. PDRP subfamily.

It catalyses the reaction N(tele)-phospho-L-histidyl/L-threonyl-[pyruvate, phosphate dikinase] + ADP = N(tele)-phospho-L-histidyl/O-phospho-L-threonyl-[pyruvate, phosphate dikinase] + AMP + H(+). The enzyme catalyses N(tele)-phospho-L-histidyl/O-phospho-L-threonyl-[pyruvate, phosphate dikinase] + phosphate + H(+) = N(tele)-phospho-L-histidyl/L-threonyl-[pyruvate, phosphate dikinase] + diphosphate. Functionally, bifunctional serine/threonine kinase and phosphorylase involved in the regulation of the pyruvate, phosphate dikinase (PPDK) by catalyzing its phosphorylation/dephosphorylation. The protein is Putative pyruvate, phosphate dikinase regulatory protein of Rhodopseudomonas palustris (strain BisB18).